The chain runs to 242 residues: Hairy and enhancer of split-related protein HELT (242 aa).

Positions 10 to 65 (RTPVSHKVIEKRRRDRINRCLNELGKTVPMALAKQSSGKLEKAEILEMTVQYLRAL) constitute a bHLH domain. Lysine 48 bears the N6-acetyllysine mark. In terms of domain architecture, Orange spans 87–122 (FHYGYHECMKNLVHYLTTVERMETKDTKYARILAFL).

Belongs to the HEY family. Self-associates. Interacts with HES5 and HEY2.

It localises to the nucleus. Its function is as follows. Transcriptional repressor which binds preferentially to the canonical E box sequence 5'-CACGCG-3'. In Homo sapiens (Human), this protein is Hairy and enhancer of split-related protein HELT (HELT).